We begin with the raw amino-acid sequence, 304 residues long: N-acetylmuramic acid 6-phosphate etherase (304 aa).

Residues 62–225 form the SIS domain; it reads IVQAFQNGGR…TTASMVMIGK (164 aa). Glu90 serves as the catalytic Proton donor. Residue Glu121 is part of the active site.

The protein belongs to the GCKR-like family. MurNAc-6-P etherase subfamily. Homodimer.

It carries out the reaction N-acetyl-D-muramate 6-phosphate + H2O = N-acetyl-D-glucosamine 6-phosphate + (R)-lactate. It functions in the pathway amino-sugar metabolism; 1,6-anhydro-N-acetylmuramate degradation. Its pathway is amino-sugar metabolism; N-acetylmuramate degradation. The protein operates within cell wall biogenesis; peptidoglycan recycling. Functionally, specifically catalyzes the cleavage of the D-lactyl ether substituent of MurNAc 6-phosphate, producing GlcNAc 6-phosphate and D-lactate. Together with AnmK, is also required for the utilization of anhydro-N-acetylmuramic acid (anhMurNAc) either imported from the medium or derived from its own cell wall murein, and thus plays a role in cell wall recycling. This chain is N-acetylmuramic acid 6-phosphate etherase, found in Actinobacillus pleuropneumoniae serotype 5b (strain L20).